A 273-amino-acid polypeptide reads, in one-letter code: Proteasome subunit alpha (273 aa).

The tract at residues Asp231–Ser273 is disordered. Low complexity predominate over residues Pro238–Ala249.

Belongs to the peptidase T1A family. The 20S proteasome core is composed of 14 alpha and 14 beta subunits that assemble into four stacked heptameric rings, resulting in a barrel-shaped structure. The two inner rings, each composed of seven catalytic beta subunits, are sandwiched by two outer rings, each composed of seven alpha subunits. The catalytic chamber with the active sites is on the inside of the barrel. Has a gated structure, the ends of the cylinder being occluded by the N-termini of the alpha-subunits. Is capped by the proteasome-associated ATPase, ARC.

The protein localises to the cytoplasm. Its pathway is protein degradation; proteasomal Pup-dependent pathway. With respect to regulation, the formation of the proteasomal ATPase ARC-20S proteasome complex, likely via the docking of the C-termini of ARC into the intersubunit pockets in the alpha-rings, may trigger opening of the gate for substrate entry. Interconversion between the open-gate and close-gate conformations leads to a dynamic regulation of the 20S proteasome proteolysis activity. Component of the proteasome core, a large protease complex with broad specificity involved in protein degradation. This is Proteasome subunit alpha from Salinispora arenicola (strain CNS-205).